Consider the following 274-residue polypeptide: Rhamnulose-1-phosphate aldolase (274 aa).

Residue Glu-117 is part of the active site. Zn(2+)-binding residues include His-141, His-143, and His-212.

This sequence belongs to the aldolase class II family. RhaD subfamily. In terms of assembly, homotetramer. The cofactor is Zn(2+).

The protein localises to the cytoplasm. The catalysed reaction is L-rhamnulose 1-phosphate = (S)-lactaldehyde + dihydroxyacetone phosphate. It participates in carbohydrate degradation; L-rhamnose degradation; glycerone phosphate from L-rhamnose: step 3/3. Catalyzes the reversible cleavage of L-rhamnulose-1-phosphate to dihydroxyacetone phosphate (DHAP) and L-lactaldehyde. This chain is Rhamnulose-1-phosphate aldolase, found in Escherichia fergusonii (strain ATCC 35469 / DSM 13698 / CCUG 18766 / IAM 14443 / JCM 21226 / LMG 7866 / NBRC 102419 / NCTC 12128 / CDC 0568-73).